We begin with the raw amino-acid sequence, 402 residues long: BTB and MATH domain-containing protein 40 (402 aa).

A disordered region spans residues Met-1 to Arg-25. Residues Ser-15–Arg-25 are compositionally biased toward low complexity. One can recognise an MATH domain in the interval Val-43–Ile-177. One can recognise a BTB domain in the interval Thr-222 to Ile-295.

As to quaternary structure, interacts with cul-3.

Its pathway is protein modification; protein ubiquitination. Functionally, probable substrate-specific adapter of an E3 ubiquitin-protein ligase complex which mediates the ubiquitination and subsequent proteasomal degradation of target proteins. The polypeptide is BTB and MATH domain-containing protein 40 (bath-40) (Caenorhabditis elegans).